Here is a 131-residue protein sequence, read N- to C-terminus: Large ribosomal subunit protein bL17 (131 aa).

Belongs to the bacterial ribosomal protein bL17 family. Part of the 50S ribosomal subunit. Contacts protein L32.

In Vesicomyosocius okutanii subsp. Calyptogena okutanii (strain HA), this protein is Large ribosomal subunit protein bL17.